The following is a 187-amino-acid chain: Elongation factor P (187 aa).

This sequence belongs to the elongation factor P family.

Its subcellular location is the cytoplasm. It participates in protein biosynthesis; polypeptide chain elongation. Its function is as follows. Involved in peptide bond synthesis. Stimulates efficient translation and peptide-bond synthesis on native or reconstituted 70S ribosomes in vitro. Probably functions indirectly by altering the affinity of the ribosome for aminoacyl-tRNA, thus increasing their reactivity as acceptors for peptidyl transferase. The polypeptide is Elongation factor P (Mycolicibacterium gilvum (strain PYR-GCK) (Mycobacterium gilvum (strain PYR-GCK))).